A 79-amino-acid chain; its full sequence is Putative membrane protein insertion efficiency factor (79 aa).

Belongs to the UPF0161 family.

It localises to the cell inner membrane. In terms of biological role, could be involved in insertion of integral membrane proteins into the membrane. The chain is Putative membrane protein insertion efficiency factor from Thermotoga neapolitana (strain ATCC 49049 / DSM 4359 / NBRC 107923 / NS-E).